We begin with the raw amino-acid sequence, 397 residues long: DNA-binding protein (397 aa).

Residues Cys116 and His118 each coordinate Zn(2+). The flexible loop stretch occupies residues Ile129–Ile161. 6 residues coordinate Zn(2+): Cys169, Cys185, Cys225, Cys227, Cys276, and Cys289. Residues Ala335–Glu397 form a C-terminal arm, DBP binding region. The segment at Pro338–Glu397 is disordered. Positions Val342–Val360 are enriched in acidic residues.

The protein belongs to the adenoviridae E2A DNA-binding protein family. In terms of assembly, homomultimerizes on viral ssDNA bound to pTP. Forms a initiation complex with viral polymerase, pTP and hosts NFIA and POU2F1/OCT1. Interacts with host SRCAP.

It is found in the host nucleus. In terms of biological role, plays a role in the elongation phase of viral strand displacement replication by unwinding the template in an ATP-independent fashion, employing its capacity to form multimers. Also enhances the rate of initiation. Released from template upon second strand synthesis. Assembles in complex with viral pTP, viral pol, host NFIA and host POU2F1/OCT1 on viral origin of replication. Covers the whole ssDNA genome during synthesis. The complementary strand synthesis induces its relese from DNA template. May inhibit cellular transcription mediated by the interaction between host SRCAP and CBP. The protein is DNA-binding protein of Snake adenovirus serotype 1 (SnAdV-1).